Reading from the N-terminus, the 164-residue chain is MELADKASFRDAMAHVGAAVNIITTDGPAGRAGFTASAVCSVTDTPPTLLVCLNRSASVWPVFSEHHTLCVNTLAAGQEALSTLFGGKTAMDERFAAADWQTGATGCPRLEAALVSFDCRIDQRVSVGTHDILFCHVVAITRHPEPRGLMWFGRGYHTLMRPAC.

The protein belongs to the non-flavoprotein flavin reductase family. RutF subfamily.

It carries out the reaction FMNH2 + NAD(+) = FMN + NADH + 2 H(+). In terms of biological role, catalyzes the reduction of FMN to FMNH2 which is used to reduce pyrimidine by RutA via the Rut pathway. This chain is FMN reductase (NADH) RutF, found in Klebsiella pneumoniae (strain 342).